A 231-amino-acid polypeptide reads, in one-letter code: Large ribosomal subunit protein uL1 (231 aa).

The protein belongs to the universal ribosomal protein uL1 family. As to quaternary structure, part of the 50S ribosomal subunit.

Its function is as follows. Binds directly to 23S rRNA. The L1 stalk is quite mobile in the ribosome, and is involved in E site tRNA release. In terms of biological role, protein L1 is also a translational repressor protein, it controls the translation of the L11 operon by binding to its mRNA. The sequence is that of Large ribosomal subunit protein uL1 from Staphylococcus epidermidis (strain ATCC 35984 / DSM 28319 / BCRC 17069 / CCUG 31568 / BM 3577 / RP62A).